We begin with the raw amino-acid sequence, 319 residues long: tRNA-cytidine(32) 2-sulfurtransferase (319 aa).

Positions 49 to 54 (SGGKDS) match the PP-loop motif motif. Positions 124, 127, and 215 each coordinate [4Fe-4S] cluster.

Belongs to the TtcA family. As to quaternary structure, homodimer. Mg(2+) serves as cofactor. [4Fe-4S] cluster is required as a cofactor.

It localises to the cytoplasm. The catalysed reaction is cytidine(32) in tRNA + S-sulfanyl-L-cysteinyl-[cysteine desulfurase] + AH2 + ATP = 2-thiocytidine(32) in tRNA + L-cysteinyl-[cysteine desulfurase] + A + AMP + diphosphate + H(+). It functions in the pathway tRNA modification. Its function is as follows. Catalyzes the ATP-dependent 2-thiolation of cytidine in position 32 of tRNA, to form 2-thiocytidine (s(2)C32). The sulfur atoms are provided by the cysteine/cysteine desulfurase (IscS) system. The protein is tRNA-cytidine(32) 2-sulfurtransferase of Shewanella amazonensis (strain ATCC BAA-1098 / SB2B).